We begin with the raw amino-acid sequence, 347 residues long: MLIKQGDRLINTRNWSELVKPEQISRDGEVSDTMYGKFVCEPLERGYATTIGNAMRRVLLSSLQGAAFVAVKISGVQHEFTTIPGVLEDVTDVVLNLKQVRLAMDTEEPQYLELKVDKRGAITAGDVRTNQHVMVLNPDQHIATLTEDIELTFELEVRMGKGYVPADMHEGLSEEIGLIKLDASFSPVRKVAYTVEQARVGQMTNYDKLILEVWTDGSVSPEDAIAYSAKIIKDQISVFINFDERISGENSNGSADSGEFNEHLFKSIDELELSVRATNCLKSANIALVGELVQKSENEMLKTKNFGRKSLDEIRRVLGDMGLDFGTKVDGFEKKYQEWKRKQQHEA.

Positions 1 to 243 (MLIKQGDRLI…DQISVFINFD (243 aa)) are alpha N-terminal domain (alpha-NTD). Residues 260-347 (FNEHLFKSID…EWKRKQQHEA (88 aa)) form an alpha C-terminal domain (alpha-CTD) region.

The protein belongs to the RNA polymerase alpha chain family. In terms of assembly, homodimer. The RNAP catalytic core consists of 2 alpha, 1 beta, 1 beta' and 1 omega subunit. When a sigma factor is associated with the core the holoenzyme is formed, which can initiate transcription.

The enzyme catalyses RNA(n) + a ribonucleoside 5'-triphosphate = RNA(n+1) + diphosphate. Functionally, DNA-dependent RNA polymerase catalyzes the transcription of DNA into RNA using the four ribonucleoside triphosphates as substrates. This chain is DNA-directed RNA polymerase subunit alpha, found in Nitratidesulfovibrio vulgaris (strain ATCC 29579 / DSM 644 / CCUG 34227 / NCIMB 8303 / VKM B-1760 / Hildenborough) (Desulfovibrio vulgaris).